We begin with the raw amino-acid sequence, 923 residues long: Rap guanine nucleotide exchange factor 3 (923 aa).

Position 79 is a phosphoserine (S79). In terms of domain architecture, DEP spans 110–186; it reads ATCPNLIRDR…RDAQFYRFPG (77 aa). The segment at 218–242 is interaction with PDE3B; the sequence is TVALRKPPGQRTDEELDLIFEELLH. Residues 311-314 and 321-322 each bind 3',5'-cyclic AMP; these read GQLA and RA. Residues 384-518 enclose the N-terminal Ras-GEF domain; that stretch reads NRYTVMSGTP…EQWPERRRCH (135 aa). The segment at 398-422 is interaction with PDE3B; sequence ELLLEAMGPDSSAHDPTETFLSDFL. A phosphoserine mark is found at S528 and S864. The region spanning 662–889 is the Ras-GEF domain; the sequence is SAKDLAGQLT…ARISTCSEQS (228 aa).

As to quaternary structure, interacts with PDE3B and PIK3R6; form a signaling complex that regulates phosphatidylinositol 3-kinase gamma in angiogenesis. In terms of tissue distribution, widely expressed with highest levels in adult kidney, heart, thyroid and brain, and fetal kidney.

The protein localises to the endomembrane system. Its function is as follows. Guanine nucleotide exchange factor (GEF) for RAP1A and RAP2A small GTPases that is activated by binding cAMP. Through simultaneous binding of PDE3B to RAPGEF3 and PIK3R6 is assembled in a signaling complex in which it activates the PI3K gamma complex and which is involved in angiogenesis. Plays a role in the modulation of the cAMP-induced dynamic control of endothelial barrier function through a pathway that is independent on Rho-mediated signaling. Required for the actin rearrangement at cell-cell junctions, such as stress fibers and junctional actin. The chain is Rap guanine nucleotide exchange factor 3 (RAPGEF3) from Homo sapiens (Human).